The sequence spans 142 residues: Large ribosomal subunit protein uL11 (142 aa).

It belongs to the universal ribosomal protein uL11 family. As to quaternary structure, part of the ribosomal stalk of the 50S ribosomal subunit. Interacts with L10 and the large rRNA to form the base of the stalk. L10 forms an elongated spine to which L12 dimers bind in a sequential fashion forming a multimeric L10(L12)X complex. In terms of processing, one or more lysine residues are methylated.

Its function is as follows. Forms part of the ribosomal stalk which helps the ribosome interact with GTP-bound translation factors. In Vibrio vulnificus (strain CMCP6), this protein is Large ribosomal subunit protein uL11.